We begin with the raw amino-acid sequence, 85 residues long: Small ribosomal subunit protein uS15c (85 aa).

It belongs to the universal ribosomal protein uS15 family. In terms of assembly, part of the 30S ribosomal subunit.

It localises to the plastid. It is found in the chloroplast. The sequence is that of Small ribosomal subunit protein uS15c (rps15) from Chaetosphaeridium globosum (Charophycean green alga).